We begin with the raw amino-acid sequence, 133 residues long: Putative dispanin subfamily A member 2d (133 aa).

At methionine 1 to histidine 57 the chain is on the extracellular side. A Glycyl lysine isopeptide (Lys-Gly) (interchain with G-Cter in ubiquitin) cross-link involves residue lysine 24. Residues valine 58–phenylalanine 78 form a helical membrane-spanning segment. The Cytoplasmic segment spans residues alanine 79–asparagine 107. Glycyl lysine isopeptide (Lys-Gly) (interchain with G-Cter in ubiquitin) cross-links involve residues lysine 83, lysine 88, and lysine 104. The helical transmembrane segment at isoleucine 108 to isoleucine 128 threads the bilayer. The Extracellular segment spans residues phenylalanine 129 to arginine 133.

This sequence belongs to the CD225/Dispanin family.

It localises to the membrane. The polypeptide is Putative dispanin subfamily A member 2d (Homo sapiens (Human)).